The primary structure comprises 558 residues: Serine palmitoyltransferase 1 (558 aa).

Over 1 to 49 (MAHIPEVLPKSIPIPAFIVTTSSYLWYYFNLVLTQIPGGQFIVSYIKKS) the chain is Lumenal. A helical transmembrane segment spans residues 50–84 (HHDDPYRTTVEIGLILYGIIYYLSKPQQKKSLQAQ). At 85–341 (KPNLSPQEID…GRGLSEHFNM (257 aa)) the chain is on the cytoplasmic side. At Thr-121 the chain carries Phosphothreonine. Residues 342–371 (DRATAIDITVGSMATALGSTGGFVLGDSVM) traverse the membrane as a helical segment. Residues 372–424 (CLHQRIGSNAYCFSACLPAYTVTSVSKVLKLMDSNNDAVQTLQKLSKSLHDSF) lie on the Lumenal side of the membrane. Residues 425-457 (ASDDSLRSYVIVTSSPVSAVLHLQLTPAYRSRK) traverse the membrane as a helical segment. Topologically, residues 458 to 558 (FGYTCEQLFE…ILACCQESNK (101 aa)) are cytoplasmic.

This sequence belongs to the class-II pyridoxal-phosphate-dependent aminotransferase family. In terms of assembly, LCB1 and LCB2 encode essential subunits of the enzyme and form a heterodimer. Component of the SPOTS complex, at least composed of LCB1/2 (LCB1 and/or LCB2), ORM1/2 (ORM1 and/or ORM2), SAC1 and TSC3. Interacts with LCB2 and TSC3. Pyridoxal 5'-phosphate serves as cofactor.

The protein resides in the cytoplasm. The protein localises to the endoplasmic reticulum membrane. It catalyses the reaction L-serine + hexadecanoyl-CoA + H(+) = 3-oxosphinganine + CO2 + CoA. It functions in the pathway lipid metabolism; sphingolipid metabolism. Its function is as follows. Component of serine palmitoyltransferase (SPT), which catalyzes the committed step in the synthesis of sphingolipids, the condensation of serine with palmitoyl CoA to form the long chain base 3-ketosphinganine. The protein is Serine palmitoyltransferase 1 (LCB1) of Saccharomyces cerevisiae (strain ATCC 204508 / S288c) (Baker's yeast).